The primary structure comprises 624 residues: Chaperone protein HtpG (624 aa).

Positions 1–338 are a; substrate-binding; the sequence is MNNKNKITHT…SQDLPLNISR (338 aa). The tract at residues 339–552 is b; sequence EILQDSSITH…TNDMSTQMAK (214 aa). Positions 553 to 624 are c; that stretch reads IFSAAGQPIP…IQRINNFFIS (72 aa).

The protein belongs to the heat shock protein 90 family. Homodimer.

The protein localises to the cytoplasm. Its function is as follows. Molecular chaperone. Has ATPase activity. This is Chaperone protein HtpG from Buchnera aphidicola subsp. Cinara cedri (strain Cc).